The primary structure comprises 389 residues: Cellobiose 2-epimerase (389 aa).

The protein belongs to the cellobiose 2-epimerase family.

Its subcellular location is the cytoplasm. The catalysed reaction is D-cellobiose = beta-D-glucosyl-(1-&gt;4)-D-mannopyranose. Its activity is regulated as follows. Enhanced by Mg(2+) and Ca(2+) ions, ethylenediaminetetraacetic acid, ethylene glycol tetraacetic acid and citrate. Inhibited by Al(3+), Fe(3+), Co(2+), Cu(2+), Zn(2+), Pb(2+) and Ag(+) ions, iodoacetate, 4-chloromercuribenzoate and N-bromosuccinimide. In terms of biological role, catalyzes the reversible epimerization of cellobiose to 4-O-beta-D-glucopyranosyl-D-mannose (Glc-Man). Can also epimerize cellotriose to Glc-Glc-Man, cellotetraose to Glc-Glc-Glc-Man, and lactose to epilactose. The sequence is that of Cellobiose 2-epimerase (ce-ne1) from Ruminococcus albus.